A 101-amino-acid polypeptide reads, in one-letter code: Small ribosomal subunit protein uS14 (101 aa).

Belongs to the universal ribosomal protein uS14 family. In terms of assembly, part of the 30S ribosomal subunit. Contacts proteins S3 and S10.

Binds 16S rRNA, required for the assembly of 30S particles and may also be responsible for determining the conformation of the 16S rRNA at the A site. The protein is Small ribosomal subunit protein uS14 of Methylibium petroleiphilum (strain ATCC BAA-1232 / LMG 22953 / PM1).